Here is a 474-residue protein sequence, read N- to C-terminus: ABHD16B (474 aa).

The 121-residue stretch at 175–295 (VICCEGNAGF…QSWKGLVVRT (121 aa)) folds into the AB hydrolase-1 domain. Active-site charge relay system residues include S248, D323, and H423.

This sequence belongs to the AB hydrolase superfamily. ABHD16 family. As to expression, expressed in most tissues, with highest expression found in the testes, skeletal muscle, and brown adipose tissue.

It catalyses the reaction a 1,2-diacyl-sn-glycero-3-phospho-L-serine + H2O = a 2-acyl-sn-glycero-3-phospho-L-serine + a fatty acid + H(+). The enzyme catalyses a 1-acylglycerol + H2O = glycerol + a fatty acid + H(+). The catalysed reaction is 1-(9Z-octadecenoyl)-glycerol + H2O = glycerol + (9Z)-octadecenoate + H(+). In terms of biological role, hydrolyzes the sn-1 position of glycerophospholipids with high specificity towards phosphatidylserine (PS), PS-PLA1 enzyme. Also hydrolyzes the acyl chain of glycerolipids with a preference for the monoacylglycerol (MAG) 1-acylglycerol, MAG lipase. Plays a regulatory role in cellular lipid homeostasis by modulating genes involved in neutral lipid degradation and in phospholipid synthesis and composition. The chain is ABHD16B from Mus musculus (Mouse).